Reading from the N-terminus, the 101-residue chain is NADH-quinone oxidoreductase subunit K (101 aa).

The next 3 membrane-spanning stretches (helical) occupy residues 2-22 (ISLN…LVGV), 29-49 (IMLF…LVAI), and 63-83 (MFII…LILW).

It belongs to the complex I subunit 4L family. As to quaternary structure, NDH-1 is composed of 14 different subunits. Subunits NuoA, H, J, K, L, M, N constitute the membrane sector of the complex.

The protein resides in the cell inner membrane. The catalysed reaction is a quinone + NADH + 5 H(+)(in) = a quinol + NAD(+) + 4 H(+)(out). In terms of biological role, NDH-1 shuttles electrons from NADH, via FMN and iron-sulfur (Fe-S) centers, to quinones in the respiratory chain. The immediate electron acceptor for the enzyme in this species is believed to be ubiquinone. Couples the redox reaction to proton translocation (for every two electrons transferred, four hydrogen ions are translocated across the cytoplasmic membrane), and thus conserves the redox energy in a proton gradient. This chain is NADH-quinone oxidoreductase subunit K, found in Campylobacter hominis (strain ATCC BAA-381 / DSM 21671 / CCUG 45161 / LMG 19568 / NCTC 13146 / CH001A).